The sequence spans 261 residues: Triosephosphate isomerase (261 aa).

10-12 contributes to the substrate binding site; the sequence is NWK. His-100 (electrophile) is an active-site residue. Residue Glu-172 is the Proton acceptor of the active site. Residues Gly-178, Ser-218, and 239 to 240 each bind substrate; that span reads GG.

The protein belongs to the triosephosphate isomerase family. As to quaternary structure, homodimer.

It localises to the cytoplasm. It carries out the reaction D-glyceraldehyde 3-phosphate = dihydroxyacetone phosphate. Its pathway is carbohydrate biosynthesis; gluconeogenesis. It participates in carbohydrate degradation; glycolysis; D-glyceraldehyde 3-phosphate from glycerone phosphate: step 1/1. Involved in the gluconeogenesis. Catalyzes stereospecifically the conversion of dihydroxyacetone phosphate (DHAP) to D-glyceraldehyde-3-phosphate (G3P). The protein is Triosephosphate isomerase of Mycobacterium bovis (strain BCG / Pasteur 1173P2).